Reading from the N-terminus, the 314-residue chain is Formimidoylglutamase (314 aa).

Residues H127, D151, H153, D155, D239, and D241 each contribute to the Mn(2+) site.

This sequence belongs to the arginase family. Mn(2+) is required as a cofactor.

The enzyme catalyses N-formimidoyl-L-glutamate + H2O = formamide + L-glutamate. Its pathway is amino-acid degradation; L-histidine degradation into L-glutamate; L-glutamate from N-formimidoyl-L-glutamate (hydrolase route): step 1/1. Its function is as follows. Catalyzes the conversion of N-formimidoyl-L-glutamate to L-glutamate and formamide. The protein is Formimidoylglutamase of Corynebacterium efficiens (strain DSM 44549 / YS-314 / AJ 12310 / JCM 11189 / NBRC 100395).